The primary structure comprises 120 residues: Autophagy-related protein 8d (120 aa).

A lipid anchor (Phosphatidylethanolamine amidated glycine) is attached at glycine 117. Positions isoleucine 118 to phenylalanine 120 are cleaved as a propeptide — removed in mature form.

This sequence belongs to the ATG8 family. In terms of assembly, interacts with ATG4B. Interacts with NBR1. The C-terminal 3 residues are removed by ATG4 to expose Gly-117 at the C-terminus. This Gly-117 forms then a thioester bond with the 'Cys-558' of ATG7 (E1-like activating enzyme) before being transferred to the 'Cys-258' of ATG3 (the specific E2 conjugating enzyme), in order to be finally amidated with phosphatidylethanolamine. This lipid modification anchors ATG8 to autophagosomes. In terms of tissue distribution, constitutively expressed.

The protein resides in the cytoplasmic vesicle. Its subcellular location is the autophagosome membrane. It localises to the vacuole membrane. It is found in the cytoplasm. The protein localises to the cytoskeleton. Its function is as follows. Ubiquitin-like modifier involved in autophagosomes formation. May mediate the delivery of the autophagosomes to the vacuole via the microtubule cytoskeleton. The polypeptide is Autophagy-related protein 8d (ATG8D) (Arabidopsis thaliana (Mouse-ear cress)).